We begin with the raw amino-acid sequence, 390 residues long: Serpin B3 (390 aa).

M1 is modified (N-acetylmethionine).

It belongs to the serpin family. Ov-serpin subfamily. As to quaternary structure, interacts with MAPK8/JNK1. Squamous cells. Expressed in some hepatocellular carcinoma (at protein level).

The protein resides in the cytoplasm. Functionally, may act as a papain-like cysteine protease inhibitor to modulate the host immune response against tumor cells. Also functions as an inhibitor of UV-induced apoptosis via suppression of the activity of c-Jun NH(2)-terminal kinase (JNK1). The polypeptide is Serpin B3 (SERPINB3) (Homo sapiens (Human)).